The sequence spans 234 residues: Zein-alpha A30 (234 aa).

A signal peptide spans 1-21; that stretch reads MAAKIFCLLMLLGLSASAATA.

Belongs to the zein family.

Zeins are major seed storage proteins. The polypeptide is Zein-alpha A30 (Zea mays (Maize)).